The chain runs to 748 residues: Transcription factor FBD3 (748 aa).

Basic and acidic residues predominate over residues 1–10 (MPEQPRRPSD). A disordered region spans residues 1–26 (MPEQPRRPSDQEQNQSETGPPTNKRR). A compositionally biased stretch (polar residues) spans 11–21 (QEQNQSETGPP). The zn(2)-C6 fungal-type DNA-binding region spans 32-59 (CNACRSRKSRCDGQRPSCSSCLSLGFDC). Disordered stretches follow at residues 116–160 (GTIN…EGIP) and 417–438 (IPDE…TSGN). Low complexity predominate over residues 131–141 (APTKASAPSGA). Residues 429–438 (SGRSPATSGN) show a composition bias toward polar residues.

Its subcellular location is the nucleus. Its function is as follows. Transcription factor; part of the Fusarium detoxification of benzoxazolinone cluster 2 (FDB2) involved in the degradation of benzoxazolinones produced by the host plant. Maize, wheat, and rye produce the 2 benzoxazinone phytoanticipins 2,4-dihy-droxy-7-methoxy-1,4-benzoxazin-3-one (DIMBOA) and 2,4-dihydroxy-1,4-benzoxazin-3-one (DIBOA) that, due to their inherent instability once released, spontaneously degrade to the more stable corresponding benzoxazolinones, 6-methoxy-2-benzoxazolinone (MBOA) and 2-benzoxazolinone (BOA), respectively. FDB3 is not essentiel, but contributes to efficient BOA biotransformation. The protein is Transcription factor FBD3 of Gibberella moniliformis (strain M3125 / FGSC 7600) (Maize ear and stalk rot fungus).